Consider the following 74-residue polypeptide: MKLIAVTIIACILLIGFSDLALGGACECQPCGPGGKACTGCPEKPQLCQQLISDIRNLQQKIRKCVCGEPQWMI.

The signal sequence occupies residues 1 to 23; it reads MKLIAVTIIACILLIGFSDLALG.

The protein is Salivary glue protein Sgs-7 (Sgs7) of Drosophila melanogaster (Fruit fly).